We begin with the raw amino-acid sequence, 282 residues long: Bifunctional protein FolD (282 aa).

NADP(+) contacts are provided by residues 166–168 (GRS) and Ser-191.

It belongs to the tetrahydrofolate dehydrogenase/cyclohydrolase family. Homodimer.

It catalyses the reaction (6R)-5,10-methylene-5,6,7,8-tetrahydrofolate + NADP(+) = (6R)-5,10-methenyltetrahydrofolate + NADPH. It carries out the reaction (6R)-5,10-methenyltetrahydrofolate + H2O = (6R)-10-formyltetrahydrofolate + H(+). Its pathway is one-carbon metabolism; tetrahydrofolate interconversion. In terms of biological role, catalyzes the oxidation of 5,10-methylenetetrahydrofolate to 5,10-methenyltetrahydrofolate and then the hydrolysis of 5,10-methenyltetrahydrofolate to 10-formyltetrahydrofolate. The sequence is that of Bifunctional protein FolD from Acidovorax ebreus (strain TPSY) (Diaphorobacter sp. (strain TPSY)).